A 24-amino-acid polypeptide reads, in one-letter code: Lectin (24 aa).

Polar residues predominate over residues Ala-1–Leu-18. The interval Ala-1–Ala-24 is disordered.

This sequence belongs to the leguminous lectin family. Homotetramer.

This chain is Lectin, found in Crotalaria juncea (Sunn hemp).